A 418-amino-acid polypeptide reads, in one-letter code: Gamma-glutamyl phosphate reductase (418 aa).

This sequence belongs to the gamma-glutamyl phosphate reductase family.

The protein localises to the cytoplasm. The catalysed reaction is L-glutamate 5-semialdehyde + phosphate + NADP(+) = L-glutamyl 5-phosphate + NADPH + H(+). It participates in amino-acid biosynthesis; L-proline biosynthesis; L-glutamate 5-semialdehyde from L-glutamate: step 2/2. Functionally, catalyzes the NADPH-dependent reduction of L-glutamate 5-phosphate into L-glutamate 5-semialdehyde and phosphate. The product spontaneously undergoes cyclization to form 1-pyrroline-5-carboxylate. This chain is Gamma-glutamyl phosphate reductase, found in Pelodictyon phaeoclathratiforme (strain DSM 5477 / BU-1).